A 288-amino-acid chain; its full sequence is Shikimate dehydrogenase (NADP(+)) (288 aa).

Residues 21-23 (SLS) and threonine 68 each bind shikimate. Residue lysine 72 is the Proton acceptor of the active site. Glutamate 84 contributes to the NADP(+) binding site. Shikimate-binding residues include asparagine 93 and aspartate 108. NADP(+) is bound by residues 132–136 (GNGGA) and leucine 230. Tyrosine 232 provides a ligand contact to shikimate. Glycine 253 is a binding site for NADP(+).

Belongs to the shikimate dehydrogenase family. Homodimer.

The enzyme catalyses shikimate + NADP(+) = 3-dehydroshikimate + NADPH + H(+). The protein operates within metabolic intermediate biosynthesis; chorismate biosynthesis; chorismate from D-erythrose 4-phosphate and phosphoenolpyruvate: step 4/7. Involved in the biosynthesis of the chorismate, which leads to the biosynthesis of aromatic amino acids. Catalyzes the reversible NADPH linked reduction of 3-dehydroshikimate (DHSA) to yield shikimate (SA). This Gloeothece citriformis (strain PCC 7424) (Cyanothece sp. (strain PCC 7424)) protein is Shikimate dehydrogenase (NADP(+)).